The primary structure comprises 1004 residues: DNA-directed RNA polymerase subunit beta' (1004 aa).

Mg(2+) contacts are provided by D388, D390, and D392. Zn(2+) is bound by residues C757, C831, C838, and C841.

It belongs to the RNA polymerase beta' chain family. The RNAP catalytic core consists of 2 alpha, 1 beta, 1 beta' and 1 omega subunit. When a sigma factor is associated with the core the holoenzyme is formed, which can initiate transcription. The cofactor is Mg(2+). It depends on Zn(2+) as a cofactor.

The catalysed reaction is RNA(n) + a ribonucleoside 5'-triphosphate = RNA(n+1) + diphosphate. Its function is as follows. DNA-dependent RNA polymerase catalyzes the transcription of DNA into RNA using the four ribonucleoside triphosphates as substrates. The chain is DNA-directed RNA polymerase subunit beta' from Oenococcus oeni (Leuconostoc oenos).